Consider the following 293-residue polypeptide: Aminodeoxychorismate lyase (293 aa).

K146 is modified (N6-(pyridoxal phosphate)lysine).

The protein belongs to the class-IV pyridoxal-phosphate-dependent aminotransferase family. As to quaternary structure, homodimer. Pyridoxal 5'-phosphate serves as cofactor.

The enzyme catalyses 4-amino-4-deoxychorismate = 4-aminobenzoate + pyruvate + H(+). It functions in the pathway cofactor biosynthesis; tetrahydrofolate biosynthesis; 4-aminobenzoate from chorismate: step 2/2. Its function is as follows. Involved in the biosynthesis of p-aminobenzoate (PABA), a precursor of tetrahydrofolate. Converts 4-amino-4-deoxychorismate into 4-aminobenzoate (PABA) and pyruvate. The chain is Aminodeoxychorismate lyase from Bacillus subtilis (strain 168).